A 452-amino-acid polypeptide reads, in one-letter code: Probable phosphoglucosamine mutase (452 aa).

S101 serves as the catalytic Phosphoserine intermediate. Residues S101, D242, D244, and D246 each coordinate Mg(2+). S101 is subject to Phosphoserine.

This sequence belongs to the phosphohexose mutase family. Mg(2+) serves as cofactor. In terms of processing, activated by phosphorylation.

The catalysed reaction is alpha-D-glucosamine 1-phosphate = D-glucosamine 6-phosphate. Catalyzes the conversion of glucosamine-6-phosphate to glucosamine-1-phosphate. The polypeptide is Probable phosphoglucosamine mutase (Methanosphaera stadtmanae (strain ATCC 43021 / DSM 3091 / JCM 11832 / MCB-3)).